A 371-amino-acid polypeptide reads, in one-letter code: F-box protein At2g26850 (371 aa).

An F-box domain is found at 59-105; sequence KMSILDLPDLPLDCILELLPPSELCTMARVCSSLRERCVSDHLWEKH.

The polypeptide is F-box protein At2g26850 (Arabidopsis thaliana (Mouse-ear cress)).